We begin with the raw amino-acid sequence, 437 residues long: Probable glycine dehydrogenase (decarboxylating) subunit 1 (437 aa).

This sequence belongs to the GcvP family. N-terminal subunit subfamily. As to quaternary structure, the glycine cleavage system is composed of four proteins: P, T, L and H. In this organism, the P 'protein' is a heterodimer of two subunits.

The catalysed reaction is N(6)-[(R)-lipoyl]-L-lysyl-[glycine-cleavage complex H protein] + glycine + H(+) = N(6)-[(R)-S(8)-aminomethyldihydrolipoyl]-L-lysyl-[glycine-cleavage complex H protein] + CO2. The glycine cleavage system catalyzes the degradation of glycine. The P protein binds the alpha-amino group of glycine through its pyridoxal phosphate cofactor; CO(2) is released and the remaining methylamine moiety is then transferred to the lipoamide cofactor of the H protein. This is Probable glycine dehydrogenase (decarboxylating) subunit 1 from Thermotoga maritima (strain ATCC 43589 / DSM 3109 / JCM 10099 / NBRC 100826 / MSB8).